Consider the following 159-residue polypeptide: MSNRAVAVLRGDPGVTGTVWFSQDKESDPCVIKGEIKGLTPGLHGFHVHQYGDSTNGCTSAGPHFNPFNKTHGGPKDDVRHVGDLGNVEAGADGVAHFEIKDHLVKIHGEHTVVGRSLVVHAGTDDLGKGVGEKKEESLKTGNRGARVACGVIATAAPQ.

The Cu cation site is built by His-47, His-49, and His-64. An intrachain disulfide couples Cys-58 to Cys-150. Positions 64, 72, 81, and 84 each coordinate Zn(2+). His-121 is a Cu cation binding site.

This sequence belongs to the Cu-Zn superoxide dismutase family. Cu cation serves as cofactor. The cofactor is Zn(2+).

It is found in the cytoplasm. It carries out the reaction 2 superoxide + 2 H(+) = H2O2 + O2. Destroys radicals which are normally produced within the cells and which are toxic to biological systems. This Haemonchus contortus (Barber pole worm) protein is Superoxide dismutase [Cu-Zn] (SOD).